Here is a 499-residue protein sequence, read N- to C-terminus: Putative antiporter subunit mnhD2 (499 aa).

14 helical membrane-spanning segments follow: residues 3–23 (LSNLLILPMLLPFLCALILVF), 33–53 (YLYLGTMTITTIISLMLLIYV), 79–99 (LSLIMVTTASFVITLIMAYGF), 109–129 (YHLPSFILFLSVGVIGSFLTS), 131–151 (LFNLYVMFEIMLLASFVLITL), 162–182 (IIYVVLNIIGSWLFLLGIGLL), 210–230 (ISLIFLVAFSAKAALVLFMWL), 241–261 (LAALFAALMTKVGAYALIRFF), 272–292 (IHPLLATMAAITMVIGAIGVI), 309–329 (IGFIILGLGTNTFAGINGAIF), 331–351 (LVNDIVVKTLLFFIIGSLVYI), 370–390 (FGVAFIIMIFAIGGVPPFSGF), 404–424 (GNYIGLALMIITSLIAMYSLF), and 452–472 (ILSILVVVVIAIGIAAPVVLN).

Belongs to the CPA3 antiporters (TC 2.A.63) subunit D family. May form a heterooligomeric complex that consists of seven subunits: mnhA2, mnhB2, mnhC2, mnhD2, mnhE2, mnhF2 and mnhG2.

It localises to the cell membrane. Functionally, expression of the mnh2 operon in E.coli is not able to catalyze Na(+)Li(+)/H(+) antiport. It does however confer higher growth rates than the control strain at up to pH 9.5. The operon may encode an NADH-ubiquinone oxidoreductase. The protein is Putative antiporter subunit mnhD2 (mnhD2) of Staphylococcus aureus.